The chain runs to 365 residues: UDP-N-acetylglucosamine--N-acetylmuramyl-(pentapeptide) pyrophosphoryl-undecaprenol N-acetylglucosamine transferase (365 aa).

UDP-N-acetyl-alpha-D-glucosamine is bound by residues 13–15 (TGG), asparagine 125, arginine 165, serine 192, and glutamine 293.

Belongs to the glycosyltransferase 28 family. MurG subfamily.

Its subcellular location is the cell inner membrane. The enzyme catalyses di-trans,octa-cis-undecaprenyl diphospho-N-acetyl-alpha-D-muramoyl-L-alanyl-D-glutamyl-meso-2,6-diaminopimeloyl-D-alanyl-D-alanine + UDP-N-acetyl-alpha-D-glucosamine = di-trans,octa-cis-undecaprenyl diphospho-[N-acetyl-alpha-D-glucosaminyl-(1-&gt;4)]-N-acetyl-alpha-D-muramoyl-L-alanyl-D-glutamyl-meso-2,6-diaminopimeloyl-D-alanyl-D-alanine + UDP + H(+). It functions in the pathway cell wall biogenesis; peptidoglycan biosynthesis. Cell wall formation. Catalyzes the transfer of a GlcNAc subunit on undecaprenyl-pyrophosphoryl-MurNAc-pentapeptide (lipid intermediate I) to form undecaprenyl-pyrophosphoryl-MurNAc-(pentapeptide)GlcNAc (lipid intermediate II). This chain is UDP-N-acetylglucosamine--N-acetylmuramyl-(pentapeptide) pyrophosphoryl-undecaprenol N-acetylglucosamine transferase, found in Ruegeria sp. (strain TM1040) (Silicibacter sp.).